The sequence spans 1138 residues: MASEETSLRALESLMSEFFHNVTSNERKREIESLLNNFAQQLGAWRFCFYFLSESHNDYVLMYSLSVFENLINKMWLGVPSQEKMQIRSSLPKLLLSQHKSLPSFICNKLCKVIVDMGRQDWPMFYHDFFTNILQLIQTPSTTPLGLIMLKTASEELACPREDLSVARKEELRKLLLEQVPTVLGLLTGVLESIWDKHSITAATPPPSPTASDTDDLLSNLIHTPNLTKQLSQPPPSLEAESERVCALALECLSHLFSWIPLSASITPSLLTTIFHFARLGCDARSRHTTSVTTNTTSSVVNGGSSSPPLHSAAPTRDRGRLGVLAMSCINELMCKNCVPLEFQEYLLRVCQQTFYLLQRITRETNAHSVRNRLEELDESYVEKFTDFLRLFVSVHLRRIESNAQFPVVEFLSLLFKYTFHQPSHEGYLSCLDIWALFLDYLTNKIRNRLEDREAIIGRYEDALVLLLTEVLNRIQFRFNQTQLEELDDETLDDDQQTEWQRYLRHSLEVVAKIMELLPTHAFSTLFAALQENLEVYLGLQRCLVTNGNDQRLNVTAENDCRRLHCSLRDLSSLLQAVGRLAEYFIGDVFGARFNDALRVVERLVEVTLYGSRIKLYNMETAVPSVLKPDLIDVHAQSLAALQAYSHWLARYYSEVQRQNPEQFISIISTAMEALPPLISSKVQEKLLLSACHLLVSIATTVRPVFLINIPAVQKVFSRITDGSAQRLPEEAQVLLCRALSNVLLLPWPNVPEGEQQWGERSSHHANLLNALTRDYRLLKGSSPPQRKGQLEATKRVICQTLGVLRDVVENISGEGTKSRQTCYQSLHESSQLSLALFPAYIHQSDVTEEMLSFFLALFQGLRVQMGAPFTEQIIQTFLNMFTREQLAESILQEGSAGCHVVEKFLKILQVVVQEPGQAFKPFLPSILSLCMEQLYPIIAERPSPDVKAELFELLFQLLHHNWRYFYRSSVLASVHRDGSDEPMENQAQFIVVMQAFGQSFLQPDIHIFRQNLSYLETLNSKHKLYHKKLFQTVMLPQFVSVLLQVLIHKSHDLLQEEIGIAVYNMASVDFSTFFSAFLPEFLTGCQGLDTSQKSVLARNFKMERDLPSFTQSVHRLVNDLRYYRLCNDSLPPGTVKL.

Residues 31–97 (IESLLNNFAQ…RSSLPKLLLS (67 aa)) enclose the Importin N-terminal domain. A compositionally biased stretch (low complexity) spans 291–307 (SVTTNTTSSVVNGGSSS). The interval 291–315 (SVTTNTTSSVVNGGSSSPPLHSAAP) is disordered.

The protein belongs to the exportin family.

The protein localises to the nucleus. Its subcellular location is the cytoplasm. Its function is as follows. Mediates the nuclear export of actin and profilin-actin complexes in somatic cells. Oocyte nuclei lack active actin export. In terms of biological role, mediates the nuclear export of actin and profilin-actin complexes in somatic cells. This chain is Exportin-6-B (xpo6-b), found in Xenopus laevis (African clawed frog).